Consider the following 544-residue polypeptide: Chaperonin GroEL (544 aa).

ATP-binding positions include 29–32, 86–90, Gly413, 477–479, and Asp493; these read TLGP, DGTTT, and DVL.

Belongs to the chaperonin (HSP60) family. In terms of assembly, forms a cylinder of 14 subunits composed of two heptameric rings stacked back-to-back. Interacts with the co-chaperonin GroES.

It localises to the cytoplasm. The enzyme catalyses ATP + H2O + a folded polypeptide = ADP + phosphate + an unfolded polypeptide.. Together with its co-chaperonin GroES, plays an essential role in assisting protein folding. The GroEL-GroES system forms a nano-cage that allows encapsulation of the non-native substrate proteins and provides a physical environment optimized to promote and accelerate protein folding. This Clostridium kluyveri (strain NBRC 12016) protein is Chaperonin GroEL.